The sequence spans 113 residues: Hydrogenase maturation factor HypA (113 aa).

Ni(2+) is bound at residue His2. Cys73, Cys75, Cys89, and Cys92 together coordinate Zn(2+).

The protein belongs to the HypA/HybF family.

Involved in the maturation of [NiFe] hydrogenases. Required for nickel insertion into the metal center of the hydrogenase. This chain is Hydrogenase maturation factor HypA, found in Methanocella arvoryzae (strain DSM 22066 / NBRC 105507 / MRE50).